A 415-amino-acid polypeptide reads, in one-letter code: Sucrose permease (415 aa).

Residues 1-16 lie on the Cytoplasmic side of the membrane; that stretch reads MALNIPFRNAYYRFAS. Residues 17–37 traverse the membrane as a helical segment; it reads SYSFLFFISWSLWWSLYAIWL. At 38–48 the chain is on the periplasmic side; the sequence is KGHLGLTGTEL. A helical transmembrane segment spans residues 49 to 69; that stretch reads GTLYSVNQFTSILFMMFYGIV. Over 70–77 the chain is Cytoplasmic; it reads QDKLGLKK. Residues 78-98 form a helical membrane-spanning segment; that stretch reads PLIWCMSFILVLTGPFMIYVY. Residues 99–107 are Periplasmic-facing; sequence EPLLQSNFS. The helical transmembrane segment at 108 to 128 threads the bilayer; that stretch reads VGLILGALFFGLGYLAGCGLL. Over 129-147 the chain is Cytoplasmic; the sequence is DSFTEKMARNFHFEYGTAR. Residues 148–167 traverse the membrane as a helical segment; that stretch reads AWGSFGYAIGAFFAGIFFSI. Over 168 to 170 the chain is Periplasmic; sequence SPH. The chain crosses the membrane as a helical span at residues 171 to 190; sequence INFWLVSLFGAVFMMINMRF. Topologically, residues 191–220 are cytoplasmic; sequence KDKDHQCIAADAGGVKKEDFIAVFKDRNFW. The helical transmembrane segment at 221 to 241 threads the bilayer; it reads VFVIFIVGTWSFYNIFDQQLF. The Periplasmic segment spans residues 242-260; sequence PVFYAGLFESHDVGTRLYG. The chain crosses the membrane as a helical span at residues 261-281; it reads YLNSFQVVLEALCMAIIPFFV. At 282-287 the chain is on the cytoplasmic side; that stretch reads NRVGPK. The helical transmembrane segment at 288–308 threads the bilayer; that stretch reads NALLIGVVIMALRILSCALFV. Residues 309-311 are Periplasmic-facing; sequence NPW. Residues 312–332 form a helical membrane-spanning segment; that stretch reads IISLVKLLHAIEVPLCVISVF. Residues 333–342 are Cytoplasmic-facing; that stretch reads KYSVANFDKR. The chain crosses the membrane as a helical span at residues 343 to 363; it reads LSSTIFLIGFQIASSLGIVLL. The Periplasmic portion of the chain corresponds to 364–377; it reads STPTGILFDHAGYQ. Residues 378–398 form a helical membrane-spanning segment; it reads TVFFAISGIVCLMLLFGIFFL. At 399 to 415 the chain is on the cytoplasmic side; that stretch reads SKKREQIVMETPVPSAI.

The protein belongs to the major facilitator superfamily. Oligosaccharide:H(+) symporter (OHS) (TC 2.A.1.5) family.

The protein resides in the cell inner membrane. Its pathway is glycan biosynthesis; sucrose metabolism. Functionally, responsible for transport of sucrose into the cell, with the concomitant import of a proton (symport system). Can also transport maltose, fructose or lactulose, but not glucose, lactose or melibiose. The substrate specificity is directed toward the fructofuranosyl moiety of the substrate. In Escherichia coli, this protein is Sucrose permease.